We begin with the raw amino-acid sequence, 619 residues long: Polyadenylate-binding protein 1-like (619 aa).

RRM domains follow at residues 11–89 (ASLY…WSQR), 99–175 (GNIF…HFKS), 191–268 (TNIY…RAQK), and 294–370 (VNLY…LAQR). A disordered region spans residues 431–458 (PAPRWTSQPPRPSSAYPPGASMVRPPVV). The PABC domain occupies 533 to 610 (QEPLTASMLA…AVAVLQAHQA (78 aa)).

It belongs to the polyadenylate-binding protein type-1 family. As to expression, expressed in ovary and testis. Also expressed in pancreas, liver and thymus, and at lower levels in other somatic tissues including brain and lung.

It localises to the cytoplasm. Functionally, poly(A)-binding protein involved in oocyte maturation and early embryo development. It is required for cytosolic mRNA polyadenylation and translational activation of maternally stored mRNA in oocytes. This Homo sapiens (Human) protein is Polyadenylate-binding protein 1-like.